Here is an 800-residue protein sequence, read N- to C-terminus: DNA mismatch repair protein MutS (800 aa).

Position 616–623 (616–623 (GPNMGGKS)) interacts with ATP.

It belongs to the DNA mismatch repair MutS family.

Its function is as follows. This protein is involved in the repair of mismatches in DNA. It is possible that it carries out the mismatch recognition step. This protein has a weak ATPase activity. This chain is DNA mismatch repair protein MutS, found in Buchnera aphidicola subsp. Baizongia pistaciae (strain Bp).